The following is a 347-amino-acid chain: Probable tRNA N6-adenosine threonylcarbamoyltransferase (347 aa).

The a divalent metal cation site is built by H109, H113, and Y130. Substrate contacts are provided by residues 130–134, D162, G177, E181, and N277; that span reads YVSGG. D305 is an a divalent metal cation binding site.

It belongs to the KAE1 / TsaD family. Component of the EKC/KEOPS complex; the whole complex dimerizes. A divalent metal cation is required as a cofactor.

The protein resides in the cytoplasm. Its subcellular location is the nucleus. It carries out the reaction L-threonylcarbamoyladenylate + adenosine(37) in tRNA = N(6)-L-threonylcarbamoyladenosine(37) in tRNA + AMP + H(+). Its function is as follows. Component of the EKC/KEOPS complex that is required for the formation of a threonylcarbamoyl group on adenosine at position 37 (t(6)A37) in tRNAs that read codons beginning with adenine. The complex is probably involved in the transfer of the threonylcarbamoyl moiety of threonylcarbamoyl-AMP (TC-AMP) to the N6 group of A37. Likely plays a direct catalytic role in this reaction, but requires other protein(s) of the complex to fulfill this activity. This is Probable tRNA N6-adenosine threonylcarbamoyltransferase from Drosophila melanogaster (Fruit fly).